The chain runs to 228 residues: Octanoyltransferase (228 aa).

The 182-residue stretch at 31-212 (EETDGILILL…KFEEVFEIKF (182 aa)) folds into the BPL/LPL catalytic domain. Substrate contacts are provided by residues 76–83 (RGGKITFH), 143–145 (AIG), and 156–158 (GIA). Residue Cys174 is the Acyl-thioester intermediate of the active site.

Belongs to the LipB family.

The protein resides in the cytoplasm. The enzyme catalyses octanoyl-[ACP] + L-lysyl-[protein] = N(6)-octanoyl-L-lysyl-[protein] + holo-[ACP] + H(+). The protein operates within protein modification; protein lipoylation via endogenous pathway; protein N(6)-(lipoyl)lysine from octanoyl-[acyl-carrier-protein]: step 1/2. Its function is as follows. Catalyzes the transfer of endogenously produced octanoic acid from octanoyl-acyl-carrier-protein onto the lipoyl domains of lipoate-dependent enzymes. Lipoyl-ACP can also act as a substrate although octanoyl-ACP is likely to be the physiological substrate. The chain is Octanoyltransferase from Caldanaerobacter subterraneus subsp. tengcongensis (strain DSM 15242 / JCM 11007 / NBRC 100824 / MB4) (Thermoanaerobacter tengcongensis).